A 205-amino-acid polypeptide reads, in one-letter code: Holliday junction branch migration complex subunit RuvA (205 aa).

The segment at 1–67 is domain I; it reads MITSIFGKVT…QIIEEAFAFN (67 aa). Residues 68–146 form a domain II region; that stretch reads TLEEKEWFCR…NNKNIKGVQV (79 aa). The tract at residues 147–150 is flexible linker; the sequence is ADGY. The interval 150-205 is domain III; sequence YDELFETLKSLGYKQQEIQDALKMIEVKPDFDISQLVAEVIKLMSFKNNEITNKTA.

It belongs to the RuvA family. Homotetramer. Forms an RuvA(8)-RuvB(12)-Holliday junction (HJ) complex. HJ DNA is sandwiched between 2 RuvA tetramers; dsDNA enters through RuvA and exits via RuvB. An RuvB hexamer assembles on each DNA strand where it exits the tetramer. Each RuvB hexamer is contacted by two RuvA subunits (via domain III) on 2 adjacent RuvB subunits; this complex drives branch migration. In the full resolvosome a probable DNA-RuvA(4)-RuvB(12)-RuvC(2) complex forms which resolves the HJ.

The protein resides in the cytoplasm. In terms of biological role, the RuvA-RuvB-RuvC complex processes Holliday junction (HJ) DNA during genetic recombination and DNA repair, while the RuvA-RuvB complex plays an important role in the rescue of blocked DNA replication forks via replication fork reversal (RFR). RuvA specifically binds to HJ cruciform DNA, conferring on it an open structure. The RuvB hexamer acts as an ATP-dependent pump, pulling dsDNA into and through the RuvAB complex. HJ branch migration allows RuvC to scan DNA until it finds its consensus sequence, where it cleaves and resolves the cruciform DNA. This chain is Holliday junction branch migration complex subunit RuvA, found in Mycoplasma genitalium (strain ATCC 33530 / DSM 19775 / NCTC 10195 / G37) (Mycoplasmoides genitalium).